The following is a 317-amino-acid chain: Glycine--tRNA ligase alpha subunit (317 aa).

This sequence belongs to the class-II aminoacyl-tRNA synthetase family. As to quaternary structure, tetramer of two alpha and two beta subunits.

The protein localises to the cytoplasm. The catalysed reaction is tRNA(Gly) + glycine + ATP = glycyl-tRNA(Gly) + AMP + diphosphate. This is Glycine--tRNA ligase alpha subunit from Leptothrix cholodnii (strain ATCC 51168 / LMG 8142 / SP-6) (Leptothrix discophora (strain SP-6)).